Reading from the N-terminus, the 317-residue chain is Apolipoprotein E (317 aa).

The first 18 residues, 1 to 18, serve as a signal peptide directing secretion; it reads MKVLWAALLVTFLAGCQA. 8 repeat units span residues 80–101, 102–123, 124–145, 146–167, 168–189, 190–211, 212–233, and 234–255. Residues 80–255 are 8 X 22 AA approximate tandem repeats; it reads TLMDETMKEL…RLDEVKEQVA (176 aa). A Methionine sulfoxide modification is found at M143. A Phosphoserine modification is found at S147. Residues 158-168 form an LDL and other lipoprotein receptors binding region; that stretch reads HLRKLRKRLLR. 162–165 contacts heparin; the sequence is LRKR. The segment at 210–290 is lipid-binding and lipoprotein association; it reads AATVGSLASQ…SWFEPLVEDM (81 aa). 229–236 is a binding site for heparin; it reads GERLRARM. A homooligomerization region spans residues 266 to 317; the sequence is QQISLQAEAFQARLKSWFEPLVEDMQRQWAGLVEKVQAAVGASTAPVPSDNH. Residues 278 to 290 are specificity for association with VLDL; it reads RLKSWFEPLVEDM.

The protein belongs to the apolipoprotein A1/A4/E family. Homotetramer. May interact with ABCA1; functionally associated with ABCA1 in the biogenesis of HDLs. May interact with APP/A4 amyloid-beta peptide; the interaction is extremely stable in vitro but its physiological significance is unclear. May interact with MAPT. May interact with MAP2. In the cerebrospinal fluid, interacts with secreted SORL1. Interacts with PMEL; this allows the loading of PMEL luminal fragment on ILVs to induce fibril nucleation. Post-translationally, APOE exists as multiple glycosylated and sialylated glycoforms within cells and in plasma. The extent of glycosylation and sialylation are tissue and context specific. Glycated in plasma VLDL. In terms of processing, phosphorylated by FAM20C in the extracellular medium.

Its subcellular location is the secreted. The protein localises to the extracellular space. The protein resides in the extracellular matrix. It is found in the extracellular vesicle. It localises to the endosome. Its subcellular location is the multivesicular body. In terms of biological role, APOE is an apolipoprotein, a protein associating with lipid particles, that mainly functions in lipoprotein-mediated lipid transport between organs via the plasma and interstitial fluids. APOE is a core component of plasma lipoproteins and is involved in their production, conversion and clearance. Apolipoproteins are amphipathic molecules that interact both with lipids of the lipoprotein particle core and the aqueous environment of the plasma. As such, APOE associates with chylomicrons, chylomicron remnants, very low density lipoproteins (VLDL) and intermediate density lipoproteins (IDL) but shows a preferential binding to high-density lipoproteins (HDL). It also binds a wide range of cellular receptors including the LDL receptor/LDLR, the LDL receptor-related proteins LRP1, LRP2 and LRP8 and the very low-density lipoprotein receptor/VLDLR that mediate the cellular uptake of the APOE-containing lipoprotein particles. Finally, APOE also has a heparin-binding activity and binds heparan-sulfate proteoglycans on the surface of cells, a property that supports the capture and the receptor-mediated uptake of APOE-containing lipoproteins by cells. A main function of APOE is to mediate lipoprotein clearance through the uptake of chylomicrons, VLDLs, and HDLs by hepatocytes. APOE is also involved in the biosynthesis by the liver of VLDLs as well as their uptake by peripheral tissues ensuring the delivery of triglycerides and energy storage in muscle, heart and adipose tissues. By participating in the lipoprotein-mediated distribution of lipids among tissues, APOE plays a critical role in plasma and tissues lipid homeostasis. APOE is also involved in two steps of reverse cholesterol transport, the HDLs-mediated transport of cholesterol from peripheral tissues to the liver, and thereby plays an important role in cholesterol homeostasis. First, it is functionally associated with ABCA1 in the biogenesis of HDLs in tissues. Second, it is enriched in circulating HDLs and mediates their uptake by hepatocytes. APOE also plays an important role in lipid transport in the central nervous system, regulating neuron survival and sprouting. This Theropithecus gelada (Gelada baboon) protein is Apolipoprotein E (APOE).